A 623-amino-acid chain; its full sequence is EIN3-binding F-box protein 2 (623 aa).

The F-box domain maps to Gln-52–Val-106. 18 LRR repeats span residues Gly-119–Gly-147, Glu-151–Asn-176, Leu-177–Arg-202, Cys-203–Ser-228, Cys-229–Ser-254, Cys-255–Met-281, Leu-307–Ser-334, Cys-335–Lys-360, Cys-361–Glu-386, Cys-387–Asn-413, Cys-414–Cys-441, Cys-442–Gly-467, Leu-468–Glu-494, Cys-495–Gly-521, Cys-522–Asn-547, Thr-548–Gly-574, Cys-575–Arg-600, and Cys-601–Tyr-623.

As to quaternary structure, part of a SCF (SKP1-cullin-F-box) protein ligase complex. Interacts with CUL1, SKP1A/ASK1, SKP1B/ASK2, EIN3, and EIL1. As to expression, ubiquitous.

It is found in the nucleus. It participates in protein modification; protein ubiquitination. Component of SCF(EBF1) E3 ubiquitin ligase complexes, which may mediate the ubiquitination and subsequent proteasomal degradation of target proteins (probably including EIN3 and EIL1). Regulator of the ethylene signaling cascade by modulating the stability of EIN3 and EIL1 proteins. The protein is EIN3-binding F-box protein 2 (EBF2) of Arabidopsis thaliana (Mouse-ear cress).